A 427-amino-acid chain; its full sequence is MATIEGIVAREILDSRGNPTVEVEVGLDDGTIARAAVPSGASTGAFEAIELRDGDKDRYLGKGVATAVSNIEDKIVDELIGYEASEQRLIDQKMLDIDGTDNKSELGANAILGVSLAVAKAAADSAELTLYRYLGGPNAHLLPVPMMNILNGGAHADSNVDIQEFMIAPIGAPTFREALRSGAEVYHALKSVLKKKDLATGLGDEGGFAPNLPTNAAALDLIAEAVEKAGYRLGTDIVFALDVAATEFFANGTYTFEGAAKTAEEMSSYYTKLADAYPIVSIEDPLAEDDWSGWQTLTASVGDRIQIVGDDLFVTNPQRIARGIAEHAANAVLVKVNQIGSLTETLDAVDLAHRAGFRCMMSHRSGETEDTTIADLAVATGCGQIKTGAPARSDRVAKYNQLLRIEEELADAARYAGAGAFPRYRSA.

A (2R)-2-phosphoglycerate-binding site is contributed by Gln163. Glu205 acts as the Proton donor in catalysis. Mg(2+)-binding residues include Asp242, Glu283, and Asp310. Positions 335, 364, 365, and 386 each coordinate (2R)-2-phosphoglycerate. Residue Lys335 is the Proton acceptor of the active site.

Belongs to the enolase family. The cofactor is Mg(2+).

It is found in the cytoplasm. The protein localises to the secreted. Its subcellular location is the cell surface. The catalysed reaction is (2R)-2-phosphoglycerate = phosphoenolpyruvate + H2O. The protein operates within carbohydrate degradation; glycolysis; pyruvate from D-glyceraldehyde 3-phosphate: step 4/5. Its function is as follows. Catalyzes the reversible conversion of 2-phosphoglycerate (2-PG) into phosphoenolpyruvate (PEP). It is essential for the degradation of carbohydrates via glycolysis. This Salinispora arenicola (strain CNS-205) protein is Enolase.